A 143-amino-acid chain; its full sequence is Nucleoside diphosphate kinase (143 aa).

Lysine 11, phenylalanine 59, arginine 87, threonine 93, arginine 104, and asparagine 114 together coordinate ATP. Histidine 117 (pros-phosphohistidine intermediate) is an active-site residue.

Belongs to the NDK family. Homotetramer. The cofactor is Mg(2+).

It localises to the cytoplasm. The catalysed reaction is a 2'-deoxyribonucleoside 5'-diphosphate + ATP = a 2'-deoxyribonucleoside 5'-triphosphate + ADP. It carries out the reaction a ribonucleoside 5'-diphosphate + ATP = a ribonucleoside 5'-triphosphate + ADP. In terms of biological role, major role in the synthesis of nucleoside triphosphates other than ATP. The ATP gamma phosphate is transferred to the NDP beta phosphate via a ping-pong mechanism, using a phosphorylated active-site intermediate. The protein is Nucleoside diphosphate kinase of Ectopseudomonas mendocina (strain ymp) (Pseudomonas mendocina).